The sequence spans 108 residues: Ig kappa chain V-V region HP 93G7 (108 aa).

The segment at 1–23 (DIQMTQTTSSLSASLGDRVTISC) is framework-1. The cysteines at positions 23 and 88 are disulfide-linked. The segment at 24 to 34 (RASQDISNYLN) is complementarity-determining-1. The interval 35–49 (WYQQKPDGTVKLLIY) is framework-2. The segment at 50 to 56 (YTSRLHS) is complementarity-determining-2. A framework-3 region spans residues 57 to 88 (GVPSRFSGSGSGTDYSLTISNLEQEDIATYFC). The interval 89–97 (QQGNMLPRT) is complementarity-determining-3. Positions 98–108 (FGGGTKLEIKR) are framework-4.

In Mus musculus (Mouse), this protein is Ig kappa chain V-V region HP 93G7.